Reading from the N-terminus, the 665-residue chain is Filensin (665 aa).

The tract at residues 1–40 (MYRRSYVFQTRKEQYEHADEASRAAEPERPADEGWAGATS) is head. Phosphoserine is present on S5. The region spanning 40–320 (SLAALQGLGE…RIIEIEGNRL (281 aa)) is the IF rod domain. The interval 41 to 75 (LAALQGLGERVAAHVQRARALEQRHAGLRRQLDAF) is coil 1A. An N-acetylalanine modification is found at A42. The linker 1 stretch occupies residues 76–84 (QRLGELAGP). The tract at residues 85–184 (EDALARQVES…RHKKNLLEVQ (100 aa)) is coil 1B. Positions 185–201 (TYISILQQIIHTTPPAS) are linker 12. The interval 202-320 (IVTSGMREEK…RIIEIEGNRL (119 aa)) is coil 2. Residues 321–665 (TSAFIETPIP…DKKKSGEKSS (345 aa)) are tail. Phosphoserine is present on residues S341 and S420. Disordered regions lie at residues 410-439 (SKFE…QISK) and 506-614 (YDGQ…KGPP). A lipid anchor (N-myristoyl glycine) is attached at G434. S513 is subject to Phosphoserine. Residues 556-571 (PEEKREGEERDEESRR) are compositionally biased toward basic and acidic residues. At S665 the chain carries Phosphoserine.

This sequence belongs to the intermediate filament family. As to quaternary structure, part of a complex required for lens intermediate filament formation composed of BFSP1, BFSP2 and CRYAA. Identified in a complex that contains VIM, EZR, AHNAK, BFSP1, BFSP2, ANK2, PLEC, PRX and spectrin. Found in a complex composed of PPL (via C-terminal linker domain), BFSP1 and BFSP2 in the retinal lens. Within the complex interacts with BFSP2. Interacts (via C-terminus) with MIP (via C-terminus) in aged lens fiber cells. In terms of processing, proteolytically cleaved during lens cell fiber differentiation with increased fragmentation as fiber cell age increases. Post-translationally, myristoylated at Gly-434 following proteolytic cleavage at Asp-433. Acetylated at Ala-42 following proteolytic cleavage at Leu-41. Expressed in the cortex and nucleus of the retina lens (at protein level).

It is found in the cell membrane. Its subcellular location is the cytoplasm. It localises to the cytoskeleton. The protein resides in the cell cortex. Functionally, required for the correct formation of lens intermediate filaments as part of a complex composed of BFSP1, BFSP2 and CRYAA. Involved in altering the calcium regulation of MIP water permeability. The polypeptide is Filensin (BFSP1) (Homo sapiens (Human)).